Reading from the N-terminus, the 436-residue chain is 3-ketoacyl-CoA thiolase (436 aa).

C99 functions as the Acyl-thioester intermediate in the catalytic mechanism. Catalysis depends on proton acceptor residues H392 and C422.

The protein belongs to the thiolase-like superfamily. Thiolase family. Heterotetramer of two alpha chains (FadJ) and two beta chains (FadI).

It is found in the cytoplasm. It carries out the reaction an acyl-CoA + acetyl-CoA = a 3-oxoacyl-CoA + CoA. It functions in the pathway lipid metabolism; fatty acid beta-oxidation. Functionally, catalyzes the final step of fatty acid oxidation in which acetyl-CoA is released and the CoA ester of a fatty acid two carbons shorter is formed. This is 3-ketoacyl-CoA thiolase from Pseudoalteromonas translucida (strain TAC 125).